The sequence spans 80 residues: Small ribosomal subunit protein uS17 (80 aa).

This sequence belongs to the universal ribosomal protein uS17 family. In terms of assembly, part of the 30S ribosomal subunit.

Functionally, one of the primary rRNA binding proteins, it binds specifically to the 5'-end of 16S ribosomal RNA. This is Small ribosomal subunit protein uS17 from Brucella abortus (strain S19).